We begin with the raw amino-acid sequence, 311 residues long: Exosome complex component Rrp4 (311 aa).

Residues 63-131 (GDVVIGEITD…EVKKVKLGLK (69 aa)) form the S1 motif domain. Residues 139-197 (RDGILVYITPTKVPRLIGKRGSMINMVKEKTHCDIVVGQNGVVWIKGEPDMERIAEKVV) form the KH domain. The disordered stretch occupies residues 222–311 (GVEPEIQVEE…EVKDENNSER (90 aa)). Over residues 241-300 (PESEDFEEASDYSEDVEVSPESEDIEEVSDESEDLEVESEDVEEGTDTPAAEEDDGEAGD) the composition is skewed to acidic residues. Over residues 301 to 311 (AEVKDENNSER) the composition is skewed to basic and acidic residues.

Belongs to the RRP4 family. Component of the archaeal exosome complex. Forms a trimer of Rrp4 and/or Csl4 subunits. The trimer associates with a hexameric ring-like arrangement composed of 3 Rrp41-Rrp42 heterodimers.

It is found in the cytoplasm. In terms of biological role, non-catalytic component of the exosome, which is a complex involved in RNA degradation. Increases the RNA binding and the efficiency of RNA degradation. Confers strong poly(A) specificity to the exosome. This Methanothermobacter thermautotrophicus (strain ATCC 29096 / DSM 1053 / JCM 10044 / NBRC 100330 / Delta H) (Methanobacterium thermoautotrophicum) protein is Exosome complex component Rrp4.